The chain runs to 203 residues: GTP cyclohydrolase 1 (203 aa).

Zn(2+) is bound by residues C87, H90, and C158.

The protein belongs to the GTP cyclohydrolase I family. As to quaternary structure, homomer.

It catalyses the reaction GTP + H2O = 7,8-dihydroneopterin 3'-triphosphate + formate + H(+). Its pathway is cofactor biosynthesis; 7,8-dihydroneopterin triphosphate biosynthesis; 7,8-dihydroneopterin triphosphate from GTP: step 1/1. This is GTP cyclohydrolase 1 from Xylella fastidiosa (strain M23).